The sequence spans 165 residues: NADPH-dependent 7-cyano-7-deazaguanine reductase (165 aa).

Cysteine 56 (thioimide intermediate) is an active-site residue. The active-site Proton donor is the aspartate 63. Substrate is bound by residues 78–80 and 97–98; these read VES and HE.

It belongs to the GTP cyclohydrolase I family. QueF type 1 subfamily.

Its subcellular location is the cytoplasm. It catalyses the reaction 7-aminomethyl-7-carbaguanine + 2 NADP(+) = 7-cyano-7-deazaguanine + 2 NADPH + 3 H(+). The protein operates within tRNA modification; tRNA-queuosine biosynthesis. Catalyzes the NADPH-dependent reduction of 7-cyano-7-deazaguanine (preQ0) to 7-aminomethyl-7-deazaguanine (preQ1). The chain is NADPH-dependent 7-cyano-7-deazaguanine reductase from Bacillus mycoides (strain KBAB4) (Bacillus weihenstephanensis).